A 451-amino-acid polypeptide reads, in one-letter code: Phosphoglucosamine mutase (451 aa).

The Phosphoserine intermediate role is filled by Ser-103. Residues Ser-103, Asp-243, Asp-245, and Asp-247 each contribute to the Mg(2+) site. Ser-103 is modified (phosphoserine).

The protein belongs to the phosphohexose mutase family. It depends on Mg(2+) as a cofactor. In terms of processing, activated by phosphorylation.

The catalysed reaction is alpha-D-glucosamine 1-phosphate = D-glucosamine 6-phosphate. Its function is as follows. Catalyzes the conversion of glucosamine-6-phosphate to glucosamine-1-phosphate. The polypeptide is Phosphoglucosamine mutase (Levilactobacillus brevis (strain ATCC 367 / BCRC 12310 / CIP 105137 / JCM 1170 / LMG 11437 / NCIMB 947 / NCTC 947) (Lactobacillus brevis)).